Reading from the N-terminus, the 224-residue chain is Putative adhesin A1E_05320 (224 aa).

The first 22 residues, 1-22 (MKKLLLIAATSATMLSSTLSFA), serve as a signal peptide directing secretion.

The chain is Putative adhesin A1E_05320 from Rickettsia canadensis (strain McKiel).